The following is a 269-amino-acid chain: Sushi domain-containing protein 3 (269 aa).

Residues 1–23 (MRRTSATLRGRARPRWRAGNTTP) are disordered. Residues 1-103 (MRRTSATLRG…VPPHETFGFK (103 aa)) are Extracellular-facing. The Sushi domain occupies 30–93 (GTCAQLHPPP…WSSGSPVCKA (64 aa)). 2 cysteine pairs are disulfide-bonded: cysteine 32-cysteine 75 and cysteine 61-cysteine 91. Residues 104-124 (VAVIASIVSCAIILLMSMAFL) traverse the membrane as a helical segment. At 125-269 (TCCLLKCVQK…PGRPKVYLPG (145 aa)) the chain is on the cytoplasmic side. Residues 171 to 237 (NNSSSVGGGN…RMGTPGPGGC (67 aa)) are disordered. A compositionally biased stretch (gly residues) spans 176–190 (VGGGNGGPSGGGGKP).

Its subcellular location is the cell membrane. This chain is Sushi domain-containing protein 3 (Susd3), found in Mus musculus (Mouse).